Reading from the N-terminus, the 89-residue chain is Large ribosomal subunit protein bL27 (89 aa).

Residues 1-22 (MAHKKAGGSSRNGRDSESKRLG) are disordered.

The protein belongs to the bacterial ribosomal protein bL27 family.

The protein is Large ribosomal subunit protein bL27 of Rhizobium etli (strain CIAT 652).